The chain runs to 126 residues: Holo-[acyl-carrier-protein] synthase (126 aa).

Asp9 and Glu58 together coordinate Mg(2+).

This sequence belongs to the P-Pant transferase superfamily. AcpS family. It depends on Mg(2+) as a cofactor.

The protein resides in the cytoplasm. The catalysed reaction is apo-[ACP] + CoA = holo-[ACP] + adenosine 3',5'-bisphosphate + H(+). Its function is as follows. Transfers the 4'-phosphopantetheine moiety from coenzyme A to a Ser of acyl-carrier-protein. The chain is Holo-[acyl-carrier-protein] synthase from Vibrio parahaemolyticus serotype O3:K6 (strain RIMD 2210633).